The following is a 485-amino-acid chain: Glutamyl-tRNA(Gln) amidotransferase subunit A (485 aa).

Residues Lys-76 and Ser-152 each act as charge relay system in the active site. Ser-176 functions as the Acyl-ester intermediate in the catalytic mechanism.

It belongs to the amidase family. GatA subfamily. As to quaternary structure, heterotrimer of A, B and C subunits.

It carries out the reaction L-glutamyl-tRNA(Gln) + L-glutamine + ATP + H2O = L-glutaminyl-tRNA(Gln) + L-glutamate + ADP + phosphate + H(+). Functionally, allows the formation of correctly charged Gln-tRNA(Gln) through the transamidation of misacylated Glu-tRNA(Gln) in organisms which lack glutaminyl-tRNA synthetase. The reaction takes place in the presence of glutamine and ATP through an activated gamma-phospho-Glu-tRNA(Gln). The chain is Glutamyl-tRNA(Gln) amidotransferase subunit A from Dechloromonas aromatica (strain RCB).